Reading from the N-terminus, the 480-residue chain is Selenium-binding protein 3 (480 aa).

Cys-12 and Cys-13 together coordinate selenite.

Belongs to the selenium-binding protein family. As to expression, expressed in young seedlings, mostly in roots.

This is Selenium-binding protein 3 (SBP3) from Arabidopsis thaliana (Mouse-ear cress).